Consider the following 212-residue polypeptide: Thiamine-phosphate synthase (212 aa).

4-amino-2-methyl-5-(diphosphooxymethyl)pyrimidine contacts are provided by residues 35 to 39 (QLRRK) and N67. D68 and D87 together coordinate Mg(2+). S106 contacts 4-amino-2-methyl-5-(diphosphooxymethyl)pyrimidine. 132–134 (TGS) serves as a coordination point for 2-[(2R,5Z)-2-carboxy-4-methylthiazol-5(2H)-ylidene]ethyl phosphate. Residue K135 coordinates 4-amino-2-methyl-5-(diphosphooxymethyl)pyrimidine. 2-[(2R,5Z)-2-carboxy-4-methylthiazol-5(2H)-ylidene]ethyl phosphate contacts are provided by residues G163 and 183-184 (IS).

It belongs to the thiamine-phosphate synthase family. Requires Mg(2+) as cofactor.

The catalysed reaction is 2-[(2R,5Z)-2-carboxy-4-methylthiazol-5(2H)-ylidene]ethyl phosphate + 4-amino-2-methyl-5-(diphosphooxymethyl)pyrimidine + 2 H(+) = thiamine phosphate + CO2 + diphosphate. It carries out the reaction 2-(2-carboxy-4-methylthiazol-5-yl)ethyl phosphate + 4-amino-2-methyl-5-(diphosphooxymethyl)pyrimidine + 2 H(+) = thiamine phosphate + CO2 + diphosphate. The enzyme catalyses 4-methyl-5-(2-phosphooxyethyl)-thiazole + 4-amino-2-methyl-5-(diphosphooxymethyl)pyrimidine + H(+) = thiamine phosphate + diphosphate. It participates in cofactor biosynthesis; thiamine diphosphate biosynthesis; thiamine phosphate from 4-amino-2-methyl-5-diphosphomethylpyrimidine and 4-methyl-5-(2-phosphoethyl)-thiazole: step 1/1. Functionally, condenses 4-methyl-5-(beta-hydroxyethyl)thiazole monophosphate (THZ-P) and 2-methyl-4-amino-5-hydroxymethyl pyrimidine pyrophosphate (HMP-PP) to form thiamine monophosphate (TMP). In Chlorobium luteolum (strain DSM 273 / BCRC 81028 / 2530) (Pelodictyon luteolum), this protein is Thiamine-phosphate synthase.